Consider the following 444-residue polypeptide: Radical S-adenosyl methionine domain-containing protein 1, mitochondrial (444 aa).

A mitochondrion-targeting transit peptide spans M1 to S39. The region spanning H40 to H274 is the Radical SAM core domain. Y47 is an S-adenosyl-L-methionine binding site. Positions 53, 57, and 60 each coordinate [4Fe-4S] cluster. S-adenosyl-L-methionine contacts are provided by residues G102, G103–T104, E135, Q162, R174, and D199.

Belongs to the anaerobic coproporphyrinogen-III oxidase family. HemW subfamily. The cofactor is [4Fe-4S] cluster.

The protein resides in the mitochondrion. In terms of biological role, may be a heme chaperone, appears to bind heme. Homologous bacterial proteins do not have oxygen-independent coproporphyrinogen-III oxidase activity. Binds 1 [4Fe-4S] cluster. The cluster is coordinated with 3 cysteines and an exchangeable S-adenosyl-L-methionine. This chain is Radical S-adenosyl methionine domain-containing protein 1, mitochondrial (rsad1), found in Danio rerio (Zebrafish).